Consider the following 482-residue polypeptide: ATP synthase subunit beta (482 aa).

168–175 (GGAGVGKT) is a binding site for ATP.

It belongs to the ATPase alpha/beta chains family. F-type ATPases have 2 components, CF(1) - the catalytic core - and CF(0) - the membrane proton channel. CF(1) has five subunits: alpha(3), beta(3), gamma(1), delta(1), epsilon(1). CF(0) has three main subunits: a(1), b(2) and c(9-12). The alpha and beta chains form an alternating ring which encloses part of the gamma chain. CF(1) is attached to CF(0) by a central stalk formed by the gamma and epsilon chains, while a peripheral stalk is formed by the delta and b chains.

Its subcellular location is the cell membrane. The enzyme catalyses ATP + H2O + 4 H(+)(in) = ADP + phosphate + 5 H(+)(out). In terms of biological role, produces ATP from ADP in the presence of a proton gradient across the membrane. The catalytic sites are hosted primarily by the beta subunits. In Nocardia farcinica (strain IFM 10152), this protein is ATP synthase subunit beta.